A 435-amino-acid polypeptide reads, in one-letter code: Adenylosuccinate lyase (435 aa).

N(6)-(1,2-dicarboxyethyl)-AMP contacts are provided by residues R4–Y5, R73–D75, and T99–S100. Catalysis depends on H147, which acts as the Proton donor/acceptor. Q218 contacts N(6)-(1,2-dicarboxyethyl)-AMP. Catalysis depends on S268, which acts as the Proton donor/acceptor. N(6)-(1,2-dicarboxyethyl)-AMP contacts are provided by residues S269, K274–N276, N282, and S313–V317.

The protein belongs to the lyase 1 family. Adenylosuccinate lyase subfamily. In terms of assembly, homotetramer. Residues from neighboring subunits contribute catalytic and substrate-binding residues to each active site.

It catalyses the reaction N(6)-(1,2-dicarboxyethyl)-AMP = fumarate + AMP. It carries out the reaction (2S)-2-[5-amino-1-(5-phospho-beta-D-ribosyl)imidazole-4-carboxamido]succinate = 5-amino-1-(5-phospho-beta-D-ribosyl)imidazole-4-carboxamide + fumarate. The protein operates within purine metabolism; AMP biosynthesis via de novo pathway; AMP from IMP: step 2/2. It functions in the pathway purine metabolism; IMP biosynthesis via de novo pathway; 5-amino-1-(5-phospho-D-ribosyl)imidazole-4-carboxamide from 5-amino-1-(5-phospho-D-ribosyl)imidazole-4-carboxylate: step 2/2. Functionally, catalyzes two reactions in de novo purine nucleotide biosynthesis. Catalyzes the breakdown of 5-aminoimidazole- (N-succinylocarboxamide) ribotide (SAICAR or 2-[5-amino-1-(5-phospho-beta-D-ribosyl)imidazole-4-carboxamido]succinate) to 5-aminoimidazole-4-carboxamide ribotide (AICAR or 5-amino-1-(5-phospho-beta-D-ribosyl)imidazole-4-carboxamide) and fumarate, and of adenylosuccinate (ADS or N(6)-(1,2-dicarboxyethyl)-AMP) to adenosine monophosphate (AMP) and fumarate. The sequence is that of Adenylosuccinate lyase (purB) from Deinococcus radiodurans (strain ATCC 13939 / DSM 20539 / JCM 16871 / CCUG 27074 / LMG 4051 / NBRC 15346 / NCIMB 9279 / VKM B-1422 / R1).